The primary structure comprises 481 residues: UDP-N-acetylmuramoylalanine--D-glutamate ligase (481 aa).

108–114 (GTNGKTS) contacts ATP.

The protein belongs to the MurCDEF family.

The protein localises to the cytoplasm. It catalyses the reaction UDP-N-acetyl-alpha-D-muramoyl-L-alanine + D-glutamate + ATP = UDP-N-acetyl-alpha-D-muramoyl-L-alanyl-D-glutamate + ADP + phosphate + H(+). It functions in the pathway cell wall biogenesis; peptidoglycan biosynthesis. Functionally, cell wall formation. Catalyzes the addition of glutamate to the nucleotide precursor UDP-N-acetylmuramoyl-L-alanine (UMA). The protein is UDP-N-acetylmuramoylalanine--D-glutamate ligase of Bifidobacterium longum subsp. infantis (strain ATCC 15697 / DSM 20088 / JCM 1222 / NCTC 11817 / S12).